Consider the following 260-residue polypeptide: Cytosolic Fe-S cluster assembly factor Nubp2 homolog (260 aa).

14 to 21 is an ATP binding site; the sequence is GKGGVGKS. Residues cysteine 188 and cysteine 191 each contribute to the [4Fe-4S] cluster site.

It belongs to the Mrp/NBP35 ATP-binding proteins family. NUBP2/CFD1 subfamily. As to quaternary structure, heterotetramer of 2 Nubp1 and 2 Nubp2 chains. [4Fe-4S] cluster serves as cofactor.

The protein localises to the cytoplasm. In terms of biological role, component of the cytosolic iron-sulfur (Fe/S) protein assembly (CIA) machinery. Required for maturation of extramitochondrial Fe-S proteins. The Nubp1-Nubp2 heterotetramer forms a Fe-S scaffold complex, mediating the de novo assembly of an Fe-S cluster and its transfer to target apoproteins. This is Cytosolic Fe-S cluster assembly factor Nubp2 homolog from Drosophila melanogaster (Fruit fly).